The primary structure comprises 390 residues: Probable L-tyrosine/L-aspartate decarboxylase (390 aa).

An N6-(pyridoxal phosphate)lysine modification is found at lysine 239.

This sequence belongs to the group II decarboxylase family. MfnA subfamily. It depends on pyridoxal 5'-phosphate as a cofactor.

It carries out the reaction L-tyrosine + H(+) = tyramine + CO2. The enzyme catalyses L-aspartate + H(+) = beta-alanine + CO2. It functions in the pathway cofactor biosynthesis; methanofuran biosynthesis. It participates in cofactor biosynthesis; coenzyme A biosynthesis. Functionally, catalyzes the decarboxylation of L-tyrosine to produce tyramine for methanofuran biosynthesis. Can also catalyze the decarboxylation of L-aspartate to produce beta-alanine for coenzyme A (CoA) biosynthesis. This chain is Probable L-tyrosine/L-aspartate decarboxylase, found in Methanococcus aeolicus (strain ATCC BAA-1280 / DSM 17508 / OCM 812 / Nankai-3).